The primary structure comprises 446 residues: tRNA-2-methylthio-N(6)-dimethylallyladenosine synthase (446 aa).

Residues 5 to 121 (RRFYIQTFGC…LPSLIDDAAS (117 aa)) form the MTTase N-terminal domain. [4Fe-4S] cluster-binding residues include Cys14, Cys50, Cys84, Cys157, Cys161, and Cys164. The region spanning 143 to 373 (REGRISAFIP…IDLQQEISAE (231 aa)) is the Radical SAM core domain. The region spanning 376 to 439 (RRQVGTVAEV…SATLSGSREG (64 aa)) is the TRAM domain.

This sequence belongs to the methylthiotransferase family. MiaB subfamily. In terms of assembly, monomer. [4Fe-4S] cluster is required as a cofactor.

The protein localises to the cytoplasm. The catalysed reaction is N(6)-dimethylallyladenosine(37) in tRNA + (sulfur carrier)-SH + AH2 + 2 S-adenosyl-L-methionine = 2-methylsulfanyl-N(6)-dimethylallyladenosine(37) in tRNA + (sulfur carrier)-H + 5'-deoxyadenosine + L-methionine + A + S-adenosyl-L-homocysteine + 2 H(+). Its function is as follows. Catalyzes the methylthiolation of N6-(dimethylallyl)adenosine (i(6)A), leading to the formation of 2-methylthio-N6-(dimethylallyl)adenosine (ms(2)i(6)A) at position 37 in tRNAs that read codons beginning with uridine. The chain is tRNA-2-methylthio-N(6)-dimethylallyladenosine synthase from Chlorobium luteolum (strain DSM 273 / BCRC 81028 / 2530) (Pelodictyon luteolum).